The sequence spans 371 residues: Bifunctional chorismate mutase/prephenate dehydratase (371 aa).

A Chorismate mutase domain is found at 1 to 92 (MTLKNALLAF…DSVLTQKKWI (92 aa)). The substrate site is built by Arg-11, Arg-28, Lys-39, Asp-48, Glu-52, Ser-84, and Gln-88. Residues 104-284 (KISFLGSFGS…NITQFIILAQ (181 aa)) form the Prephenate dehydratase domain. Residues 285–371 (KKTYITNKKT…IKCIKILGCF (87 aa)) form a regulatory region.

The protein resides in the cytoplasm. It carries out the reaction chorismate = prephenate. It catalyses the reaction prephenate + H(+) = 3-phenylpyruvate + CO2 + H2O. It functions in the pathway amino-acid biosynthesis; L-phenylalanine biosynthesis; phenylpyruvate from prephenate: step 1/1. The protein operates within metabolic intermediate biosynthesis; prephenate biosynthesis; prephenate from chorismate: step 1/1. Its function is as follows. Catalyzes the Claisen rearrangement of chorismate to prephenate and the decarboxylation/dehydration of prephenate to phenylpyruvate. The sequence is that of Bifunctional chorismate mutase/prephenate dehydratase (pheA) from Buchnera aphidicola subsp. Baizongia pistaciae (strain Bp).